A 543-amino-acid polypeptide reads, in one-letter code: Chaperonin GroEL 2 (543 aa).

ATP contacts are provided by residues 29–32 (TLGP), 86–90 (DGTTT), glycine 413, 477–479 (DAA), and aspartate 493. A disordered region spans residues 523–543 (PQEPEPAAGGHGHGHQHGPGF). Over residues 534–543 (GHGHQHGPGF) the composition is skewed to basic residues.

This sequence belongs to the chaperonin (HSP60) family. Forms a cylinder of 14 subunits composed of two heptameric rings stacked back-to-back. Interacts with the co-chaperonin GroES.

It is found in the cytoplasm. The enzyme catalyses ATP + H2O + a folded polypeptide = ADP + phosphate + an unfolded polypeptide.. Its function is as follows. Together with its co-chaperonin GroES, plays an essential role in assisting protein folding. The GroEL-GroES system forms a nano-cage that allows encapsulation of the non-native substrate proteins and provides a physical environment optimized to promote and accelerate protein folding. The protein is Chaperonin GroEL 2 of Salinispora tropica (strain ATCC BAA-916 / DSM 44818 / JCM 13857 / NBRC 105044 / CNB-440).